The sequence spans 118 residues: Putative ankyrin repeat protein R747 (118 aa).

Residues 70–99 (NCYYLLDYAIMKNDIPVIVTLIEKGANINR) form an ANK repeat.

This is Putative ankyrin repeat protein R747 from Acanthamoeba polyphaga (Amoeba).